Here is a 326-residue protein sequence, read N- to C-terminus: Ribonuclease Z (326 aa).

Zn(2+)-binding residues include histidine 62, histidine 64, aspartate 66, histidine 67, histidine 140, aspartate 211, and histidine 269. Aspartate 66 (proton acceptor) is an active-site residue.

Belongs to the RNase Z family. As to quaternary structure, homodimer. Zn(2+) is required as a cofactor.

The enzyme catalyses Endonucleolytic cleavage of RNA, removing extra 3' nucleotides from tRNA precursor, generating 3' termini of tRNAs. A 3'-hydroxy group is left at the tRNA terminus and a 5'-phosphoryl group is left at the trailer molecule.. Functionally, zinc phosphodiesterase, which displays some tRNA 3'-processing endonuclease activity. Probably involved in tRNA maturation, by removing a 3'-trailer from precursor tRNA. This Synechocystis sp. (strain ATCC 27184 / PCC 6803 / Kazusa) protein is Ribonuclease Z.